Consider the following 222-residue polypeptide: Cytochrome b6 (222 aa).

A helical transmembrane segment spans residues 39-59 (IFYCLGGITLTCFLIQFATGF). C42 is a heme c binding site. Heme b-binding residues include H93 and H107. The next 3 helical transmembrane spans lie at 97–117 (ASMM…TGGF), 123–143 (LTWV…VTGY), and 193–213 (LHTF…FLMI). H194 and H209 together coordinate heme b.

It belongs to the cytochrome b family. PetB subfamily. As to quaternary structure, the 4 large subunits of the cytochrome b6-f complex are cytochrome b6, subunit IV (17 kDa polypeptide, PetD), cytochrome f and the Rieske protein, while the 4 small subunits are PetG, PetL, PetM and PetN. The complex functions as a dimer. Heme b serves as cofactor. It depends on heme c as a cofactor.

It localises to the cellular thylakoid membrane. Functionally, component of the cytochrome b6-f complex, which mediates electron transfer between photosystem II (PSII) and photosystem I (PSI), cyclic electron flow around PSI, and state transitions. The sequence is that of Cytochrome b6 from Cyanothece sp. (strain PCC 7425 / ATCC 29141).